Reading from the N-terminus, the 115-residue chain is Nucleoid-associated protein PMN2A_1347 (115 aa).

Residues 89–115 (STSTMKERMEDLTGGFKLNLPGMGEEN) are disordered.

The protein belongs to the YbaB/EbfC family. In terms of assembly, homodimer.

Its subcellular location is the cytoplasm. The protein localises to the nucleoid. Functionally, binds to DNA and alters its conformation. May be involved in regulation of gene expression, nucleoid organization and DNA protection. This chain is Nucleoid-associated protein PMN2A_1347, found in Prochlorococcus marinus (strain NATL2A).